We begin with the raw amino-acid sequence, 388 residues long: MTASQPAGAVDALLLVSFGGPEGPDDVLPFLRNVTAGRDVPRSRLEVVAEQYRMFGGRSPLNDQNRALAEALRAELPGLPVYWGNRNWAPYLTDTVAEMAAAGVRRAACFVTSAFSSYSGCRQYRENLAAALAALPPALAVPELVKLRLFFDHPGFVEPMVDRCVAALAELPEKARTDAHLLFTAHSLPLSQARASGPRGDAYPRQLRAVAEVIAAGVERVTGVRHPVELAYCSRSGPPAVPWLEPDVGDRLVELAGAGAVGAVVVPLGFVSDHMEVAYDLDVLAAQRAAQVGLPVARAGTVGTDPRFVAMVRELVEEVRNPDLPRRALTEFGPWPQSCAAHCCVPPRQSPQHASRAVTDAAATGRRGDAAILMGNDATSTGRRGERR.

Residues serine 59 and tyrosine 124 each coordinate Fe-coproporphyrin III. Fe(2+)-binding residues include histidine 186 and glutamate 276. The disordered stretch occupies residues 349 to 369; that stretch reads QSPQHASRAVTDAAATGRRGD.

This sequence belongs to the ferrochelatase family.

The protein localises to the cytoplasm. The enzyme catalyses Fe-coproporphyrin III + 2 H(+) = coproporphyrin III + Fe(2+). It participates in porphyrin-containing compound metabolism; protoheme biosynthesis. Involved in coproporphyrin-dependent heme b biosynthesis. Catalyzes the insertion of ferrous iron into coproporphyrin III to form Fe-coproporphyrin III. This Frankia alni (strain DSM 45986 / CECT 9034 / ACN14a) protein is Coproporphyrin III ferrochelatase.